A 333-amino-acid polypeptide reads, in one-letter code: Beta-ketoacyl-[acyl-carrier-protein] synthase III (333 aa).

Residues cysteine 116 and histidine 258 contribute to the active site. The ACP-binding stretch occupies residues 259–263; sequence QANQR. Asparagine 288 is an active-site residue.

It belongs to the thiolase-like superfamily. FabH family. Homodimer.

Its subcellular location is the cytoplasm. The catalysed reaction is malonyl-[ACP] + acetyl-CoA + H(+) = 3-oxobutanoyl-[ACP] + CO2 + CoA. The protein operates within lipid metabolism; fatty acid biosynthesis. In terms of biological role, catalyzes the condensation reaction of fatty acid synthesis by the addition to an acyl acceptor of two carbons from malonyl-ACP. Catalyzes the first condensation reaction which initiates fatty acid synthesis and may therefore play a role in governing the total rate of fatty acid production. Possesses both acetoacetyl-ACP synthase and acetyl transacylase activities. Its substrate specificity determines the biosynthesis of branched-chain and/or straight-chain of fatty acids. This is Beta-ketoacyl-[acyl-carrier-protein] synthase III from Microcystis aeruginosa (strain NIES-843 / IAM M-2473).